The chain runs to 502 residues: ATP synthase subunit alpha (502 aa).

169–176 (GDRQTGKT) is an ATP binding site.

It belongs to the ATPase alpha/beta chains family. In terms of assembly, F-type ATPases have 2 components, CF(1) - the catalytic core - and CF(0) - the membrane proton channel. CF(1) has five subunits: alpha(3), beta(3), gamma(1), delta(1), epsilon(1). CF(0) has three main subunits: a(1), b(2) and c(9-12). The alpha and beta chains form an alternating ring which encloses part of the gamma chain. CF(1) is attached to CF(0) by a central stalk formed by the gamma and epsilon chains, while a peripheral stalk is formed by the delta and b chains.

It localises to the cell inner membrane. The catalysed reaction is ATP + H2O + 4 H(+)(in) = ADP + phosphate + 5 H(+)(out). Produces ATP from ADP in the presence of a proton gradient across the membrane. The alpha chain is a regulatory subunit. This chain is ATP synthase subunit alpha, found in Solidesulfovibrio magneticus (strain ATCC 700980 / DSM 13731 / RS-1) (Desulfovibrio magneticus).